Reading from the N-terminus, the 340-residue chain is Ketol-acid reductoisomerase (NADP(+)) (340 aa).

The KARI N-terminal Rossmann domain maps to 3-183; it reads LSVYYDKDCN…GGGRTGIIET (181 aa). NADP(+) is bound by residues 26-29, S54, and 84-87; these read FGSQ and DELQ. H109 is a catalytic residue. Residue G135 coordinates NADP(+). In terms of domain architecture, KARI C-terminal knotted spans 184-329; that stretch reads TFKDETETDL…ERLRAMMPWI (146 aa). Mg(2+)-binding residues include D192, E196, E228, and E232. S253 contacts substrate.

This sequence belongs to the ketol-acid reductoisomerase family. Mg(2+) is required as a cofactor.

The enzyme catalyses (2R)-2,3-dihydroxy-3-methylbutanoate + NADP(+) = (2S)-2-acetolactate + NADPH + H(+). It catalyses the reaction (2R,3R)-2,3-dihydroxy-3-methylpentanoate + NADP(+) = (S)-2-ethyl-2-hydroxy-3-oxobutanoate + NADPH + H(+). Its pathway is amino-acid biosynthesis; L-isoleucine biosynthesis; L-isoleucine from 2-oxobutanoate: step 2/4. The protein operates within amino-acid biosynthesis; L-valine biosynthesis; L-valine from pyruvate: step 2/4. In terms of biological role, involved in the biosynthesis of branched-chain amino acids (BCAA). Catalyzes an alkyl-migration followed by a ketol-acid reduction of (S)-2-acetolactate (S2AL) to yield (R)-2,3-dihydroxy-isovalerate. In the isomerase reaction, S2AL is rearranged via a Mg-dependent methyl migration to produce 3-hydroxy-3-methyl-2-ketobutyrate (HMKB). In the reductase reaction, this 2-ketoacid undergoes a metal-dependent reduction by NADPH to yield (R)-2,3-dihydroxy-isovalerate. This Wolinella succinogenes (strain ATCC 29543 / DSM 1740 / CCUG 13145 / JCM 31913 / LMG 7466 / NCTC 11488 / FDC 602W) (Vibrio succinogenes) protein is Ketol-acid reductoisomerase (NADP(+)).